The chain runs to 389 residues: 26S proteasome non-ATPase regulatory subunit 6 (389 aa).

The PCI domain maps to 193-361 (DFKQAAELFL…EIVETNRPDS (169 aa)).

The protein belongs to the proteasome subunit S10 family. Component of the 19S proteasome regulatory particle complex. The 26S proteasome consists of a 20S core particle (CP) and two 19S regulatory subunits (RP). The regulatory particle is made of a lid composed of 9 subunits including PSMD6, a base containing 6 ATPases and few additional components.

In terms of biological role, component of the 26S proteasome, a multiprotein complex involved in the ATP-dependent degradation of ubiquitinated proteins. This complex plays a key role in the maintenance of protein homeostasis by removing misfolded or damaged proteins, which could impair cellular functions, and by removing proteins whose functions are no longer required. Therefore, the proteasome participates in numerous cellular processes, including cell cycle progression, apoptosis, or DNA damage repair. This is 26S proteasome non-ATPase regulatory subunit 6 (Psmd6) from Mus musculus (Mouse).